Consider the following 244-residue polypeptide: 3-deoxy-manno-octulosonate cytidylyltransferase (244 aa).

It belongs to the KdsB family.

It is found in the cytoplasm. It carries out the reaction 3-deoxy-alpha-D-manno-oct-2-ulosonate + CTP = CMP-3-deoxy-beta-D-manno-octulosonate + diphosphate. Its pathway is nucleotide-sugar biosynthesis; CMP-3-deoxy-D-manno-octulosonate biosynthesis; CMP-3-deoxy-D-manno-octulosonate from 3-deoxy-D-manno-octulosonate and CTP: step 1/1. The protein operates within bacterial outer membrane biogenesis; lipopolysaccharide biosynthesis. In terms of biological role, activates KDO (a required 8-carbon sugar) for incorporation into bacterial lipopolysaccharide in Gram-negative bacteria. This Rickettsia canadensis (strain McKiel) protein is 3-deoxy-manno-octulosonate cytidylyltransferase.